A 214-amino-acid polypeptide reads, in one-letter code: Pyridoxine/pyridoxamine 5'-phosphate oxidase (214 aa).

Substrate contacts are provided by residues Arg-9–Tyr-12 and Lys-67. FMN-binding positions include Arg-62–Lys-67, Tyr-77–Thr-78, Arg-83, Lys-84, and Gln-106. The substrate site is built by Tyr-124, Arg-128, and Ser-132. Residues Gln-141–Ser-142 and Trp-186 contribute to the FMN site. Substrate is bound at residue Arg-192–His-194. Arg-196 provides a ligand contact to FMN.

The protein belongs to the pyridoxamine 5'-phosphate oxidase family. Homodimer. FMN serves as cofactor.

The catalysed reaction is pyridoxamine 5'-phosphate + O2 + H2O = pyridoxal 5'-phosphate + H2O2 + NH4(+). The enzyme catalyses pyridoxine 5'-phosphate + O2 = pyridoxal 5'-phosphate + H2O2. It functions in the pathway cofactor metabolism; pyridoxal 5'-phosphate salvage; pyridoxal 5'-phosphate from pyridoxamine 5'-phosphate: step 1/1. It participates in cofactor metabolism; pyridoxal 5'-phosphate salvage; pyridoxal 5'-phosphate from pyridoxine 5'-phosphate: step 1/1. Catalyzes the oxidation of either pyridoxine 5'-phosphate (PNP) or pyridoxamine 5'-phosphate (PMP) into pyridoxal 5'-phosphate (PLP). The polypeptide is Pyridoxine/pyridoxamine 5'-phosphate oxidase (Leptospira interrogans serogroup Icterohaemorrhagiae serovar copenhageni (strain Fiocruz L1-130)).